We begin with the raw amino-acid sequence, 594 residues long: CDPK-related kinase 4 (594 aa).

The segment at 1–131 (MGHCYSRNIS…DSGGGERLDK (131 aa)) is disordered. Gly-2 carries the N-myristoyl glycine lipid modification. Positions 37-58 (IPQSPVASGTPEVNSYNISPFQ) are enriched in polar residues. Residues 116–131 (VVDHGGDSGGGERLDK) are compositionally biased toward basic and acidic residues. The Protein kinase domain occupies 143–405 (YELGKEVGRG…AAQALAHPWL (263 aa)). ATP contacts are provided by residues 149–157 (VGRGHFGHT) and Lys-175. Residue Asp-271 is the Proton acceptor of the active site. Ser-311 bears the Phosphoserine mark. The autoinhibitory domain stretch occupies residues 409 to 439 (NPGLLLDFSVYKLVKSYIRASPFRRSALKAL). The calmodulin binding (CaMBD) stretch occupies residues 428-448 (ASPFRRSALKALSKAIPDEEL). 4 consecutive EF-hand domains span residues 446–481 (EELVFLKAQFMLLDPKDGGLSLNCFTMALTRYATDA), 482–517 (MMESRLPDILNTMQPLAQKKLDFEEFCAAAVSVYQL), 518–557 (EALEEWEQIATSAFEHFEHEGNRIISVQELAGEMSVGPSA), and 558–587 (YPLLKDWIRSSDGKLSFLGYAKFLHGVTVR). Residues Asp-462, Lys-501, Glu-506, Asn-539, Glu-546, Ser-567, Asp-569, and Lys-571 each coordinate Ca(2+). Position 573 is a phosphoserine (Ser-573).

It belongs to the protein kinase superfamily. Ser/Thr protein kinase family. CDPK subfamily. In terms of assembly, binds calmodulin (CaM) in a calcium-dependent manner. Post-translationally, autophosphorylated.

It is found in the cell membrane. It carries out the reaction L-seryl-[protein] + ATP = O-phospho-L-seryl-[protein] + ADP + H(+). The enzyme catalyses L-threonyl-[protein] + ATP = O-phospho-L-threonyl-[protein] + ADP + H(+). Its activity is regulated as follows. Activated by calcium and calmodulin. Autophosphorylation may play an important role in the regulation of the kinase activity. May play a role in signal transduction pathways that involve calcium as a second messenger. In Arabidopsis thaliana (Mouse-ear cress), this protein is CDPK-related kinase 4 (CRK4).